We begin with the raw amino-acid sequence, 472 residues long: MELKTMYFDTNNTMYLKVVSKKFVDKLNEGYNYLDDEYKIATLDITDDLFYKCSDDCVRECFNNDSSAHLRMRKTANELVSFTDYKNVFGQLRKDSVFVLQVFPKFDDPEFQMQEITDGNHGTIYKANRFYLGEKFDLGDVEVVKFFIKKGTDIHLHYDSIQRWAFDNRKTEVSMYLFGFSFVRGLDNFKVLAKICRDGNLELLRLLELNGFNETIKLYAIILSYISFQPLLTNYLLTKSYNFQKSNITVSNWKATMPYGTIDQYKTKVLLMAIANNHAELVQYLLTQNPSDKDINHAMLYAVTTANASLLDYTLKNGGNIHYKNDQALILAVRFNHISMVRKLICLGMDSNNVFALTMAAENNHQDIVQHLINRGADVNANNRSALIAAVKNGHLKIVQMFVNNGADIKIDDTVIKTACKNGHNNIVKYLLGKGVSCDDIVLPSNSSFFSIVKLAVKRSIIVNNDKSNKIK.

8 ANK repeats span residues Tyr125–Leu156, Asp187–Ile216, Tyr265–Ile295, His297–Tyr323, Asn325–Ser351, Asn352–Ala381, Asn382–Ile411, and Asp413–Asp440.

The protein is Putative ankyrin repeat protein L675 of Acanthamoeba polyphaga (Amoeba).